The sequence spans 78 residues: UPF0335 protein A1C_00850 (78 aa).

It belongs to the UPF0335 family.

In Rickettsia akari (strain Hartford), this protein is UPF0335 protein A1C_00850.